A 568-amino-acid polypeptide reads, in one-letter code: Urocanate hydratase (568 aa).

NAD(+) contacts are provided by residues 58 to 59 (GG), glutamine 136, 182 to 184 (GMG), glutamate 202, arginine 207, 248 to 249 (NA), 269 to 273 (QTSAH), 279 to 280 (YL), and tyrosine 328. The active site involves cysteine 416. Glycine 498 is an NAD(+) binding site.

This sequence belongs to the urocanase family. It depends on NAD(+) as a cofactor.

The protein resides in the cytoplasm. The enzyme catalyses 4-imidazolone-5-propanoate = trans-urocanate + H2O. Its pathway is amino-acid degradation; L-histidine degradation into L-glutamate; N-formimidoyl-L-glutamate from L-histidine: step 2/3. In terms of biological role, catalyzes the conversion of urocanate to 4-imidazolone-5-propionate. In Photobacterium profundum (strain SS9), this protein is Urocanate hydratase.